The sequence spans 61 residues: Nakoroxin (61 aa).

Intrachain disulfides connect C3-C19, C12-C37, C41-C49, and C50-C55.

The protein belongs to the three-finger toxin family. Short-chain subfamily. In terms of tissue distribution, expressed by the venom gland.

It localises to the secreted. In terms of biological role, shows no cytotoxicity and does not inhibit the binding of alpha-bungarotoxin to nicotinic acetylcholine receptors of muscle and alpha-7/CHRNA7 types. However, it potentiates the binding of alpha-bungarotoxin to the acetylcholine-binding protein from Lymnaea stagnalis. In Naja kaouthia (Monocled cobra), this protein is Nakoroxin.